Reading from the N-terminus, the 54-residue chain is MAATDVRPKITMACQVCKHRNYITRKNRRNDPDRLELRKFCPNCRTHTEHRETR.

It belongs to the bacterial ribosomal protein bL33 family.

The chain is Large ribosomal subunit protein bL33 from Parafrankia sp. (strain EAN1pec).